Reading from the N-terminus, the 75-residue chain is Putative membrane protein insertion efficiency factor (75 aa).

The protein belongs to the UPF0161 family.

The protein localises to the cell membrane. Functionally, could be involved in insertion of integral membrane proteins into the membrane. The sequence is that of Putative membrane protein insertion efficiency factor from Bacillus cytotoxicus (strain DSM 22905 / CIP 110041 / 391-98 / NVH 391-98).